The following is an 83-amino-acid chain: uncharacterized protein (83 aa).

The helical transmembrane segment at 50–70 (IMVFLGEAWIILIPFAIFCII) threads the bilayer.

The protein belongs to the plectrovirus ORF7 family.

It localises to the host membrane. This is an uncharacterized protein from Spiroplasma citri (SpV1).